The sequence spans 436 residues: Putative actin-fragmin kinase DDB_G0268748 (436 aa).

Residues 14–58 are disordered; that stretch reads DKNIDSGSSSSNIGGSSSNSSGTTNKRSSGNFNGSSASSSPSSST. The segment covering 18-57 has biased composition (low complexity); the sequence is DSGSSSSNIGGSSSNSSGTTNKRSSGNFNGSSASSSPSSS.

Belongs to the protein kinase superfamily. AFK Ser/Thr protein kinase family.

This is Putative actin-fragmin kinase DDB_G0268748 from Dictyostelium discoideum (Social amoeba).